We begin with the raw amino-acid sequence, 359 residues long: Ribosomal RNA small subunit methyltransferase H (359 aa).

S-adenosyl-L-methionine-binding positions include 39–41, Asp-58, Phe-87, Asp-108, and Gln-115; that span reads AGH. A disordered region spans residues 339-359; the sequence is IQGSASPGRAKNTARIRTRRG. Over residues 350 to 359 the composition is skewed to basic residues; that stretch reads NTARIRTRRG.

The protein belongs to the methyltransferase superfamily. RsmH family.

The protein resides in the cytoplasm. It carries out the reaction cytidine(1402) in 16S rRNA + S-adenosyl-L-methionine = N(4)-methylcytidine(1402) in 16S rRNA + S-adenosyl-L-homocysteine + H(+). Its function is as follows. Specifically methylates the N4 position of cytidine in position 1402 (C1402) of 16S rRNA. This chain is Ribosomal RNA small subunit methyltransferase H, found in Bifidobacterium longum subsp. infantis (strain ATCC 15697 / DSM 20088 / JCM 1222 / NCTC 11817 / S12).